Reading from the N-terminus, the 366-residue chain is Dual-specificity RNA methyltransferase RlmN (366 aa).

The active-site Proton acceptor is Glu-91. In terms of domain architecture, Radical SAM core spans 97–333 (EDDRGTLCVS…TTVRKTRGED (237 aa)). A disulfide bond links Cys-104 and Cys-338. [4Fe-4S] cluster contacts are provided by Cys-111, Cys-115, and Cys-118. S-adenosyl-L-methionine-binding positions include 164–165 (GE), Ser-196, 218–220 (SLH), and Asn-295. Cys-338 functions as the S-methylcysteine intermediate in the catalytic mechanism.

The protein belongs to the radical SAM superfamily. RlmN family. [4Fe-4S] cluster is required as a cofactor.

The protein localises to the cytoplasm. It catalyses the reaction adenosine(2503) in 23S rRNA + 2 reduced [2Fe-2S]-[ferredoxin] + 2 S-adenosyl-L-methionine = 2-methyladenosine(2503) in 23S rRNA + 5'-deoxyadenosine + L-methionine + 2 oxidized [2Fe-2S]-[ferredoxin] + S-adenosyl-L-homocysteine. The enzyme catalyses adenosine(37) in tRNA + 2 reduced [2Fe-2S]-[ferredoxin] + 2 S-adenosyl-L-methionine = 2-methyladenosine(37) in tRNA + 5'-deoxyadenosine + L-methionine + 2 oxidized [2Fe-2S]-[ferredoxin] + S-adenosyl-L-homocysteine. In terms of biological role, specifically methylates position 2 of adenine 2503 in 23S rRNA and position 2 of adenine 37 in tRNAs. m2A2503 modification seems to play a crucial role in the proofreading step occurring at the peptidyl transferase center and thus would serve to optimize ribosomal fidelity. This is Dual-specificity RNA methyltransferase RlmN from Laribacter hongkongensis (strain HLHK9).